Reading from the N-terminus, the 217-residue chain is UDP-N-acetylglucosamine transferase subunit ALG14 (217 aa).

Topologically, residues 1 to 3 (MLS) are lumenal. Residues 4–26 (ILILAATAAGLVILLFQRLWTVL) form a helical membrane-spanning segment. Residues 27–217 (GPHHVTPRES…PKSVYLGRIV (191 aa)) are Cytoplasmic-facing.

Belongs to the ALG14 family. In terms of assembly, forms with ALG13 the active heterodimeric UDP-N-acetylglucosamine transferase complex.

The protein resides in the endoplasmic reticulum membrane. Its function is as follows. Part of the UDP-N-acetylglucosamine transferase complex that operates in the biosynthetic pathway of dolichol-linked oligosaccharides, the glycan precursors employed in protein asparagine (N)-glycosylation. The assembly of dolichol-linked oligosaccharides begins on the cytosolic side of the endoplasmic reticulum membrane and finishes in its lumen. The sequential addition of sugars to dolichol pyrophosphate produces dolichol-linked oligosaccharides containing fourteen sugars, including two GlcNAcs, nine mannoses and three glucoses. Once assembled, the oligosaccharides are transferred from the lipid to nascent proteins by oligosaccharyltransferases. Functions as a protein-membrane adapter recruiting ALG13 at the cytoplasmic face of the endoplasmic reticulum, where the complex catalyzes the second step of dolichol pyrophosphate biosynthesis, transferring a beta1,4-linked N-acetylglucosamine (GlcNAc) from UDP-GlcNAc to GlcNAc-pyrophosphatedolichol (Gn-PDol) to produce N,N'-diacetylchitobiosyl diphosphodolichol. N,N'-diacetylchitobiosyl diphosphodolichol is a substrate for ALG1, the following enzyme in the biosynthetic pathway. The polypeptide is UDP-N-acetylglucosamine transferase subunit ALG14 (Mus musculus (Mouse)).